The sequence spans 92 residues: Small ribosomal subunit protein uS19 (92 aa).

Belongs to the universal ribosomal protein uS19 family.

Protein S19 forms a complex with S13 that binds strongly to the 16S ribosomal RNA. This chain is Small ribosomal subunit protein uS19, found in Streptococcus agalactiae serotype Ia (strain ATCC 27591 / A909 / CDC SS700).